Reading from the N-terminus, the 184-residue chain is GTP cyclohydrolase 1 (184 aa).

Positions 75, 78, and 146 each coordinate Zn(2+).

This sequence belongs to the GTP cyclohydrolase I family. Homomer.

It carries out the reaction GTP + H2O = 7,8-dihydroneopterin 3'-triphosphate + formate + H(+). It participates in cofactor biosynthesis; 7,8-dihydroneopterin triphosphate biosynthesis; 7,8-dihydroneopterin triphosphate from GTP: step 1/1. This chain is GTP cyclohydrolase 1, found in Streptococcus pneumoniae (strain Hungary19A-6).